The sequence spans 188 residues: EP300-interacting inhibitor of differentiation 1 (188 aa).

A disordered region spans residues 1 to 122 (MSEMAELSEL…PEEEQLSGAG (122 aa)). Composition is skewed to acidic residues over residues 53–64 (LEEEGPMEEEEA) and 94–117 (FESE…EEEQ). The interval 55–121 (EEGPMEEEEA…YPEEEQLSGA (67 aa)) is interaction with NR0B2. The short motif at 179-183 (LGCDE) is the LXCXE motif element.

As to quaternary structure, interacts via its LXCXE motif with the entire pocket region of RB1. Interacts with EP300, NR0B2 and TRIM27.

Its subcellular location is the nucleus. It is found in the cytoplasm. In terms of biological role, interacts with RB1 and EP300 and acts as a repressor of MYOD1 transactivation. Inhibits EP300 and CBP histone acetyltransferase activity. May be involved in coupling cell cycle exit to the transcriptional activation of genes required for cellular differentiation. May act as a candidate coinhibitory factor for NR0B2 that can be directly linked to transcription inhibitory mechanisms. The polypeptide is EP300-interacting inhibitor of differentiation 1 (Pongo abelii (Sumatran orangutan)).